A 313-amino-acid polypeptide reads, in one-letter code: Tyrosine recombinase XerC (313 aa).

One can recognise a Core-binding (CB) domain in the interval 1-85 (MNDQVEAFLR…AVKSFFAFLT (85 aa)). The Tyr recombinase domain occupies 106-291 (DLPRALTPHQ…NHASSAQPVR (186 aa)). Residues Arg147, Lys171, His243, Arg246, and His269 contribute to the active site. The active-site O-(3'-phospho-DNA)-tyrosine intermediate is the Tyr278.

The protein belongs to the 'phage' integrase family. XerC subfamily. In terms of assembly, forms a cyclic heterotetrameric complex composed of two molecules of XerC and two molecules of XerD.

It is found in the cytoplasm. Its function is as follows. Site-specific tyrosine recombinase, which acts by catalyzing the cutting and rejoining of the recombining DNA molecules. The XerC-XerD complex is essential to convert dimers of the bacterial chromosome into monomers to permit their segregation at cell division. It also contributes to the segregational stability of plasmids. The sequence is that of Tyrosine recombinase XerC from Roseiflexus sp. (strain RS-1).